The following is a 649-amino-acid chain: Replication protein E1 (649 aa).

The short motif at 87–89 (KRK) is the Nuclear localization signal element. A phosphoserine; by host mark is found at Ser-93 and Ser-107. A Nuclear export signal motif is present at residues 106–115 (ISPRLKAICI). The DNA-binding region stretch occupies residues 186-352 (ICQTPLTNIL…QTVLQHSFND (167 aa)). The SF3 helicase domain occupies 451-601 (VEFMSFLTAL…FPFDENGNPV (151 aa)). 477–484 (GAANTGKS) contributes to the ATP binding site. Residue Lys-558 forms a Glycyl lysine isopeptide (Lys-Gly) (interchain with G-Cter in SUMO) linkage. Residues 624–649 (EDEDKENDGDSLPTFKCVSGQNTNTL) are disordered.

This sequence belongs to the papillomaviridae E1 protein family. As to quaternary structure, can form hexamers. Interacts with E2 protein; this interaction increases E1 DNA binding specificity. Interacts with host DNA polymerase subunit POLA2. Interacts with host single stranded DNA-binding protein RPA1. Interacts with host TOP1; this interaction stimulates the enzymatic activity of TOP1. Phosphorylated. Post-translationally, sumoylated.

It localises to the host nucleus. The catalysed reaction is Couples ATP hydrolysis with the unwinding of duplex DNA by translocating in the 3'-5' direction.. It carries out the reaction ATP + H2O = ADP + phosphate + H(+). Its function is as follows. ATP-dependent DNA 3'-5' helicase required for initiation of viral DNA replication. It forms a complex with the viral E2 protein. The E1-E2 complex binds to the replication origin which contains binding sites for both proteins. During the initial step, a dimer of E1 interacts with a dimer of protein E2 leading to a complex that binds the viral origin of replication with high specificity. Then, a second dimer of E1 displaces the E2 dimer in an ATP-dependent manner to form the E1 tetramer. Following this, two E1 monomers are added to each half of the site, which results in the formation of two E1 trimers on the viral ori. Subsequently, two hexamers will be created. The double hexamer acts as a bi-directional helicase machinery and unwinds the viral DNA and then recruits the host DNA polymerase to start replication. This Human papillomavirus type 16 protein is Replication protein E1.